The sequence spans 188 residues: UPF0398 protein OEOE_1093 (188 aa).

This sequence belongs to the UPF0398 family.

The chain is UPF0398 protein OEOE_1093 from Oenococcus oeni (strain ATCC BAA-331 / PSU-1).